A 177-amino-acid polypeptide reads, in one-letter code: ECF RNA polymerase sigma factor SigL (177 aa).

A sigma-70 factor domain-2 region spans residues 18–85 (LYDEHAAVLW…MIIDERRSAR (68 aa)). The Interaction with polymerase core subunit RpoC signature appears at 42–45 (DVVQ). The interval 119–167 (ALAQLSAEHRAVIQRSYYRGWSTAQIATDLGIAEGTVKSRLHYAVRALR) is sigma-70 factor domain-4. The H-T-H motif DNA-binding region spans 141–160 (TAQIATDLGIAEGTVKSRLH).

The protein belongs to the sigma-70 factor family. ECF subfamily. In terms of assembly, interacts transiently with the RNA polymerase catalytic core formed by RpoA, RpoB, RpoC and RpoZ (2 alpha, 1 beta, 1 beta' and 1 omega subunit) to form the RNA polymerase holoenzyme that can initiate transcription. Interacts (via sigma-70 factor domain 4) with anti-sigma-L factor RslA.

In terms of biological role, sigma factors are initiation factors that promote the attachment of RNA polymerase to specific initiation sites and are then released. Extracytoplasmic function (ECF) sigma factors are held in an inactive form by an anti-sigma factor until released by regulated intramembrane proteolysis. The sequence is that of ECF RNA polymerase sigma factor SigL (sigL) from Mycobacterium tuberculosis (strain ATCC 35801 / TMC 107 / Erdman).